Reading from the N-terminus, the 498-residue chain is Glutamate--tRNA ligase (498 aa).

The 'HIGH' region motif lies at proline 11–asparagine 21. A 'KMSKS' region motif is present at residues lysine 260–arginine 264. Lysine 263 contacts ATP.

It belongs to the class-I aminoacyl-tRNA synthetase family. Glutamate--tRNA ligase type 1 subfamily. As to quaternary structure, monomer.

The protein resides in the cytoplasm. It catalyses the reaction tRNA(Glu) + L-glutamate + ATP = L-glutamyl-tRNA(Glu) + AMP + diphosphate. Catalyzes the attachment of glutamate to tRNA(Glu) in a two-step reaction: glutamate is first activated by ATP to form Glu-AMP and then transferred to the acceptor end of tRNA(Glu). This is Glutamate--tRNA ligase from Leuconostoc mesenteroides subsp. mesenteroides (strain ATCC 8293 / DSM 20343 / BCRC 11652 / CCM 1803 / JCM 6124 / NCDO 523 / NBRC 100496 / NCIMB 8023 / NCTC 12954 / NRRL B-1118 / 37Y).